Consider the following 515-residue polypeptide: SWI/SNF-related matrix-associated actin-dependent regulator of chromatin subfamily D member 1 (515 aa).

Positions 1–128 are disordered; the sequence is MAARAGFQSV…RNHNAKKKKM (128 aa). Gly residues predominate over residues 14 to 23; it reads GGAGASGGAG. The interaction with ESR1, NR1H4, NR3C1, PGR and SMARCA4 stretch occupies residues 43–167; sequence APGQGLYRSP…DQTIMRKRLD (125 aa). Asymmetric dimethylarginine occurs at positions 68 and 88. A Glycyl lysine isopeptide (Lys-Gly) (interchain with G-Cter in SUMO2) cross-link involves residue lysine 101. Over residues 104-117 the composition is skewed to low complexity; the sequence is APQQIQQVQQQAVQ. Positions 168-474 are interaction with SMARCC1 and SMARCC2; sequence IQEALKRPIK…TMTDVVGNPE (307 aa). Residues 180–515 are necessary for GR/NR3C1-mediated remodeling and transcription from chromatin; required for GR/NR3C1 interaction with the BRG1/SMARCA4 complex in vivo; that stretch reads RKLRIFISNT…LEQALGIRNT (336 aa). A Phosphothreonine modification is found at threonine 203. Lysine 223 is subject to N6-acetyllysine. An SWIB/MDM2 domain is found at 290–367; that stretch reads YQPPQFKLDP…PQRLHALLMP (78 aa). Positions 412–440 form a coiled coil; that stretch reads ASQQEIATLDNKIHETIETINQLKTQREF.

The protein belongs to the SMARCD family. Component of the multiprotein chromatin-remodeling complexes SWI/SNF: SWI/SNF-A (BAF), SWI/SNF-B (PBAF) and related complexes. The canonical complex contains a catalytic subunit (either SMARCA4/BRG1/BAF190A or SMARCA2/BRM/BAF190B), and at least SMARCE1, ACTL6A/BAF53, SMARCC1/BAF155, SMARCC2/BAF170, and SMARCB1/SNF5/BAF47. Other subunits specific to each of the complexes may also be present permitting several possible combinations developmentally and tissue specific. Component of the BAF complex, which includes at least actin (ACTB), ARID1A/BAF250A, ARID1B/BAF250B, SMARCA2/BRM, SMARCA4/BRG1/BAF190A, ACTL6A/BAF53, ACTL6B/BAF53B, SMARCE1/BAF57, SMARCC1/BAF155, SMARCC2/BAF170, SMARCB1/SNF5/INI1, and one or more SMARCD1/BAF60A, SMARCD2/BAF60B, or SMARCD3/BAF60C. In muscle cells, the BAF complex also contains DPF3. Component of neural progenitors-specific chromatin remodeling complex (npBAF complex) composed of at least, ARID1A/BAF250A or ARID1B/BAF250B, SMARCD1/BAF60A, SMARCD3/BAF60C, SMARCA2/BRM/BAF190B, SMARCA4/BRG1/BAF190A, SMARCB1/BAF47, SMARCC1/BAF155, SMARCE1/BAF57, SMARCC2/BAF170, PHF10/BAF45A, ACTL6A/BAF53A and actin. Component of neuron-specific chromatin remodeling complex (nBAF complex) composed of at least, ARID1A/BAF250A or ARID1B/BAF250B, SMARCD1/BAF60A, SMARCD3/BAF60C, SMARCA2/BRM/BAF190B, SMARCA4/BRG1/BAF190A, SMARCB1/BAF47, SMARCC1/BAF155, SMARCE1/BAF57, SMARCC2/BAF170, DPF1/BAF45B, DPF3/BAF45C, ACTL6B/BAF53B and actin. Component of the SWI/SNF-B (PBAF) chromatin remodeling complex, at least composed of SMARCA4/BRG1, SMARCB1/BAF47/SNF5, ACTL6A/BAF53A or ACTL6B/BAF53B, SMARCE1/BAF57, SMARCD1/BAF60A, SMARCD2/BAF60B, perhaps SMARCD3/BAF60C, SMARCC1/BAF155, SMARCC2/BAF170, PBRM1/BAF180, ARID2/BAF200 and actin (ACTB). Component of SWI/SNF (GBAF) subcomplex, which includes at least BICRA or BICRAL (mutually exclusive), BRD9, SS18, SMARCA2/BRM, SMARCA4/BRG1/BAF190A, ACTL6A/BAF53, SMARCC1/BAF155, and SMARCD1/BAF60A. Specifically interacts with the VDR heterodimer complex. Interacts with ESR1, NR3C1, NR1H4, PGR, SMARCA4, SMARCC1 and SMARCC2. Interacts with DPF2. Interacts with DPF3a (isoform 2 of DPF3/BAF45C) and with HDGFL2 in a DPF3a-dependent manner. Interacts with FOS, FOSB isoform 1 and 2, FOSL1 and FOSL2. Interacts with AKIRIN2. In terms of tissue distribution, ubiquitous.

Its subcellular location is the nucleus. In terms of biological role, involved in transcriptional activation and repression of select genes by chromatin remodeling (alteration of DNA-nucleosome topology). Component of SWI/SNF chromatin remodeling complexes that carry out key enzymatic activities, changing chromatin structure by altering DNA-histone contacts within a nucleosome in an ATP-dependent manner. Belongs to the neural progenitors-specific chromatin remodeling complex (npBAF complex) and the neuron-specific chromatin remodeling complex (nBAF complex). During neural development a switch from a stem/progenitor to a postmitotic chromatin remodeling mechanism occurs as neurons exit the cell cycle and become committed to their adult state. The transition from proliferating neural stem/progenitor cells to postmitotic neurons requires a switch in subunit composition of the npBAF and nBAF complexes. As neural progenitors exit mitosis and differentiate into neurons, npBAF complexes which contain ACTL6A/BAF53A and PHF10/BAF45A, are exchanged for homologous alternative ACTL6B/BAF53B and DPF1/BAF45B or DPF3/BAF45C subunits in neuron-specific complexes (nBAF). The npBAF complex is essential for the self-renewal/proliferative capacity of the multipotent neural stem cells. The nBAF complex along with CREST plays a role regulating the activity of genes essential for dendrite growth. Has a strong influence on vitamin D-mediated transcriptional activity from an enhancer vitamin D receptor element (VDRE). May be a link between mammalian SWI-SNF-like chromatin remodeling complexes and the vitamin D receptor (VDR) heterodimer. Mediates critical interactions between nuclear receptors and the BRG1/SMARCA4 chromatin-remodeling complex for transactivation. The protein is SWI/SNF-related matrix-associated actin-dependent regulator of chromatin subfamily D member 1 (Smarcd1) of Mus musculus (Mouse).